A 300-amino-acid chain; its full sequence is Acetylglutamate kinase (300 aa).

Residues 73–74 (GG), Arg-95, and Asn-197 each bind substrate.

The protein belongs to the acetylglutamate kinase family. ArgB subfamily.

The protein resides in the cytoplasm. The catalysed reaction is N-acetyl-L-glutamate + ATP = N-acetyl-L-glutamyl 5-phosphate + ADP. It participates in amino-acid biosynthesis; L-arginine biosynthesis; N(2)-acetyl-L-ornithine from L-glutamate: step 2/4. In terms of biological role, catalyzes the ATP-dependent phosphorylation of N-acetyl-L-glutamate. In Bordetella pertussis (strain Tohama I / ATCC BAA-589 / NCTC 13251), this protein is Acetylglutamate kinase.